Here is a 691-residue protein sequence, read N- to C-terminus: Proprotein convertase subtilisin/kexin type 9 (691 aa).

Positions 1 to 29 (MGTVSSRRLWWPLPLLLLLLLLGPAGARA) are cleaved as a signal peptide. A propeptide spanning residues 30–151 (QEDDDGDYEE…IEEDSSVFAQ (122 aa)) is cleaved from the precursor. Tyr-37 carries the post-translational modification Sulfotyrosine. Phosphoserine is present on Ser-46. The region spanning 76–148 (TYVVVLKEET…VDYIEEDSSV (73 aa)) is the Inhibitor I9 domain. Residues 154 to 460 (PWNLERITPA…GWQLFCRTVW (307 aa)) enclose the Peptidase S8 domain. Catalysis depends on charge relay system residues Asp-185 and His-225. Intrachain disulfides connect Cys-222–Cys-254 and Cys-322–Cys-357. Ser-385 (charge relay system) is an active-site residue. Residues 449–691 (GAGWQLFCRT…HLAQASQELQ (243 aa)) form a C-terminal domain region. 3 disulfide bridges follow: Cys-456-Cys-526, Cys-476-Cys-525, and Cys-485-Cys-508. Asn-532 carries N-linked (GlcNAc...) asparagine glycosylation. Disulfide bonds link Cys-533–Cys-600, Cys-551–Cys-599, Cys-561–Cys-587, Cys-607–Cys-678, Cys-625–Cys-677, and Cys-634–Cys-653. Residue Ser-687 is modified to Phosphoserine.

Belongs to the peptidase S8 family. As to quaternary structure, monomer. Can self-associate to form dimers and higher multimers which may have increased LDLR degrading activity. The precursor protein but not the mature protein may form multimers. Interacts with APOB, VLDLR, LRP8/APOER2 and BACE1. The full-length immature form (pro-PCSK9) interacts with SCNN1A, SCNN1B and SCNN1G. The pro-PCSK9 form (via C-terminal domain) interacts with LDLR. Interacts (via the C-terminal domain) with ANXA2 (via repeat Annexin 1); the interaction inhibits the degradation of LDLR. Requires Ca(2+) as cofactor. In terms of processing, cleavage by furin and PCSK5 generates a truncated inactive protein that is unable to induce LDLR degradation. Post-translationally, undergoes autocatalytic cleavage in the endoplasmic reticulum to release the propeptide from the N-terminus and the cleavage of the propeptide is strictly required for its maturation and activation. The cleaved propeptide however remains associated with the catalytic domain through non-covalent interactions, preventing potential substrates from accessing its active site. As a result, it is secreted from cells as a propeptide-containing, enzymatically inactive protein. Phosphorylation protects the propeptide against proteolysis.

The protein resides in the cytoplasm. The protein localises to the secreted. Its subcellular location is the endosome. It is found in the lysosome. It localises to the cell surface. The protein resides in the endoplasmic reticulum. The protein localises to the golgi apparatus. With respect to regulation, its proteolytic activity is autoinhibited by the non-covalent binding of the propeptide to the catalytic domain. Inhibited by EGTA. Crucial player in the regulation of plasma cholesterol homeostasis. Binds to low-density lipid receptor family members: low density lipoprotein receptor (LDLR), very low density lipoprotein receptor (VLDLR), apolipoprotein E receptor (LRP1/APOER) and apolipoprotein receptor 2 (LRP8/APOER2), and promotes their degradation in intracellular acidic compartments. Acts via a non-proteolytic mechanism to enhance the degradation of the hepatic LDLR through a clathrin LDLRAP1/ARH-mediated pathway. May prevent the recycling of LDLR from endosomes to the cell surface or direct it to lysosomes for degradation. Can induce ubiquitination of LDLR leading to its subsequent degradation. Inhibits intracellular degradation of APOB via the autophagosome/lysosome pathway in a LDLR-independent manner. Involved in the disposal of non-acetylated intermediates of BACE1 in the early secretory pathway. Inhibits epithelial Na(+) channel (ENaC)-mediated Na(+) absorption by reducing ENaC surface expression primarily by increasing its proteasomal degradation. Regulates neuronal apoptosis via modulation of LRP8/APOER2 levels and related anti-apoptotic signaling pathways. This Saimiri boliviensis boliviensis (Bolivian squirrel monkey) protein is Proprotein convertase subtilisin/kexin type 9 (PCSK9).